Here is a 334-residue protein sequence, read N- to C-terminus: Biotin synthase (334 aa).

The region spanning 55-280 is the Radical SAM core domain; it reads EEIEVEGIIS…HTMLRFAGGR (226 aa). Residues cysteine 70, cysteine 74, and cysteine 77 each contribute to the [4Fe-4S] cluster site. Residues cysteine 113, cysteine 205, and arginine 275 each coordinate [2Fe-2S] cluster.

The protein belongs to the radical SAM superfamily. Biotin synthase family. As to quaternary structure, homodimer. [4Fe-4S] cluster serves as cofactor. [2Fe-2S] cluster is required as a cofactor.

The enzyme catalyses (4R,5S)-dethiobiotin + (sulfur carrier)-SH + 2 reduced [2Fe-2S]-[ferredoxin] + 2 S-adenosyl-L-methionine = (sulfur carrier)-H + biotin + 2 5'-deoxyadenosine + 2 L-methionine + 2 oxidized [2Fe-2S]-[ferredoxin]. It participates in cofactor biosynthesis; biotin biosynthesis; biotin from 7,8-diaminononanoate: step 2/2. In terms of biological role, catalyzes the conversion of dethiobiotin (DTB) to biotin by the insertion of a sulfur atom into dethiobiotin via a radical-based mechanism. The protein is Biotin synthase of Corynebacterium glutamicum (strain R).